The chain runs to 213 residues: Triosephosphate isomerase (213 aa).

7–9 (NLK) is a binding site for substrate. Residue histidine 88 is the Electrophile of the active site. The Proton acceptor role is filled by glutamate 136. The substrate site is built by isoleucine 141 and glycine 174.

It belongs to the triosephosphate isomerase family. In terms of assembly, homotetramer; dimer of dimers.

The protein resides in the cytoplasm. The enzyme catalyses D-glyceraldehyde 3-phosphate = dihydroxyacetone phosphate. It functions in the pathway carbohydrate biosynthesis; gluconeogenesis. Its pathway is carbohydrate degradation; glycolysis; D-glyceraldehyde 3-phosphate from glycerone phosphate: step 1/1. Involved in the gluconeogenesis. Catalyzes stereospecifically the conversion of dihydroxyacetone phosphate (DHAP) to D-glyceraldehyde-3-phosphate (G3P). The sequence is that of Triosephosphate isomerase from Thermoplasma volcanium (strain ATCC 51530 / DSM 4299 / JCM 9571 / NBRC 15438 / GSS1).